The chain runs to 471 residues: Tryptophanase (471 aa).

Residue lysine 256 is modified to N6-(pyridoxal phosphate)lysine.

Belongs to the beta-eliminating lyase family. Homotetramer. The cofactor is pyridoxal 5'-phosphate.

It carries out the reaction L-tryptophan + H2O = indole + pyruvate + NH4(+). The protein operates within amino-acid degradation; L-tryptophan degradation via pyruvate pathway; indole and pyruvate from L-tryptophan: step 1/1. This chain is Tryptophanase, found in Salinibacter ruber (strain DSM 13855 / M31).